A 225-amino-acid chain; its full sequence is MVKVTFLGHAAFYIEGSKKILIDPFLSGNPVASAKPDDFKSVDLILVTHAHGDHLGDVGTIAKRTGAKVVAMYDLANYIAEKYKGVETIGMNYGPTKVDEVEIVQVPAWHSSSDGKYSIGNACGYIVKLDGVTIYHAGDTYVFKDMELFAELYGPIDVALLPIGGHFTMGVREAAKAVELLKPRHVIPMHYNTWPPIAADPEEFKKLVGEKAKVVILKPGESLEL.

It belongs to the UPF0173 family.

This Pyrococcus furiosus (strain ATCC 43587 / DSM 3638 / JCM 8422 / Vc1) protein is UPF0173 metal-dependent hydrolase PF1764.